The sequence spans 445 residues: Trigger factor (445 aa).

One can recognise a PPIase FKBP-type domain in the interval 162–247 (GDQVTIDAIG…IKAVHTAEPT (86 aa)).

This sequence belongs to the FKBP-type PPIase family. Tig subfamily.

Its subcellular location is the cytoplasm. It carries out the reaction [protein]-peptidylproline (omega=180) = [protein]-peptidylproline (omega=0). Its function is as follows. Involved in protein export. Acts as a chaperone by maintaining the newly synthesized protein in an open conformation. Functions as a peptidyl-prolyl cis-trans isomerase. This Rickettsia massiliae (strain Mtu5) protein is Trigger factor.